The chain runs to 141 residues: Hemoglobin subunit alpha-A/A' (141 aa).

The 141-residue stretch at 1–141 folds into the Globin domain; that stretch reads VLSANDKTNV…VGNVLTAKYR (141 aa). H58 contacts O2. H87 contributes to the heme b binding site.

This sequence belongs to the globin family. As to quaternary structure, heterotetramer of two alpha chains and two beta chains. In terms of tissue distribution, red blood cells.

In terms of biological role, involved in oxygen transport from the lung to the various peripheral tissues. This chain is Hemoglobin subunit alpha-A/A' (HBAA), found in Gyps rueppelli (Rueppell's griffon).